Consider the following 257-residue polypeptide: Glutamate racemase (257 aa).

Substrate is bound by residues 12 to 13 and 44 to 45; these read DS and YG. C75 functions as the Proton donor/acceptor in the catalytic mechanism. Residue 76–77 coordinates substrate; the sequence is NT. The active-site Proton donor/acceptor is C176. 177–178 contributes to the substrate binding site; the sequence is TH.

The protein belongs to the aspartate/glutamate racemases family.

The enzyme catalyses L-glutamate = D-glutamate. It functions in the pathway cell wall biogenesis; peptidoglycan biosynthesis. In terms of biological role, provides the (R)-glutamate required for cell wall biosynthesis. The sequence is that of Glutamate racemase from Thermus thermophilus (strain ATCC BAA-163 / DSM 7039 / HB27).